The chain runs to 1103 residues: Trophozoite exported protein 1 (1103 aa).

A coiled-coil region spans residues 173–212; the sequence is KKEKIEDKKYEQDDEEENEEEEEEEEEEEGEEENKEDEEF. 2 disordered regions span residues 178–210 and 271–301; these read EDKKYEQDDEEENEEEEEEEEEEEGEEENKEDE and KSYSGDEKINTSDNAKSCSGDEKVITSDNGK. The span at 184-210 shows a compositional bias: acidic residues; that stretch reads QDDEEENEEEEEEEEEEEGEEENKEDE. The span at 271 to 280 shows a compositional bias: basic and acidic residues; sequence KSYSGDEKIN. Coiled-coil stretches lie at residues 304–330 and 478–518; these read DYVKNESEEQEEKENMLNNKKRSLECN and YKNY…KLNN. The disordered stretch occupies residues 544-601; it reads YFDEGENPYNRNNKNYRTDNKNSDDNNNNNNYYYNNYNSDDNYNSEDNEYNNGNYRFR. Positions 568-585 are enriched in low complexity; it reads DNNNNNNYYYNNYNSDDN. Coiled coils occupy residues 650-791, 819-932, and 993-1030; these read FRNL…LSGI, DEKY…IYKK, and NKKLIGHCQDLEKENSTLQNKLSNEIKNSKMLSKNLSK. An RING-type zinc finger spans residues 1050–1089; the sequence is CSVCMENFRNYIIIKCGHIYCNNCIFNNLKTRNRKCPQCK.

The protein localises to the host cell membrane. The sequence is that of Trophozoite exported protein 1 from Plasmodium falciparum (isolate 3D7).